The primary structure comprises 61 residues: Temporin-ALi (61 aa).

A signal peptide spans 1–22 (MFPLKKSLLLLFFLATINLSLC). Residues 23–46 (EQERNAEEERRDEPDERNAEVEKR) constitute a propeptide that is removed on maturation. Leucine 59 carries the leucine amide modification.

This sequence belongs to the frog skin active peptide (FSAP) family. Temporin subfamily. As to expression, expressed by the skin glands.

The protein resides in the secreted. Antimicrobial peptide with activity against Gram-positive and Gram-negative bacteria and against fungi. Has been tested against S.aureus (MIC=7.5 ug/mL), B.pumilus (MIC=7.5 ug/mL), B.cereus (MIC=75.0 ug/mL), E.coli (MIC=7.5 ug/mL), B.dysenteriae (MIC=20.0 ug/mL), A.cacoaceticus (MIC=60.0 ug/mL), P.aeruginosa (MIC=5.0 ug/mL) and C.albicans (MIC=5.0 ug/mL). Also shows a weak hemolytic activity. This chain is Temporin-ALi, found in Amolops loloensis (Lolokou Sucker Frog).